The following is a 570-amino-acid chain: Multidrug and toxin extrusion protein 1 (570 aa).

The residue at position 1 (Met-1) is an N-acetylmethionine. At 1–37 (MEAPEEPAPVRGGPEATLEVRGSRCLRLSAFREELRA) the chain is on the cytoplasmic side. The helical transmembrane segment at 38 to 58 (LLVLAGPAFLVQLMVFLISFI) threads the bilayer. Residues 59-72 (SSVFCGHLGKLELD) are Extracellular-facing. The chain crosses the membrane as a helical span at residues 73-93 (AVTLAIAVINVTGVSVGFGLS). Topologically, residues 94 to 123 (SACDTLISQTYGSQNLKHVGVILQRSALVL) are cytoplasmic. A helical transmembrane segment spans residues 124–144 (LLCCFPCWALFLNTQHILLLF). Topologically, residues 145–152 (RQDPDVSR) are extracellular. A helical transmembrane segment spans residues 153–173 (LTQTYVTIFIPALPATFLYML). Topologically, residues 174-176 (QVK) are cytoplasmic. Residues 177–197 (YLLNQGIVLPQIVTGVAANLV) form a helical membrane-spanning segment. The Extracellular segment spans residues 198–216 (NALANYLFLHQLHLGVIGS). Residues 217 to 237 (ALANLISQYTLALLLFLYILG) traverse the membrane as a helical segment. At 238–256 (KKLHQATWGGWSLECLQDW) the chain is on the cytoplasmic side. The chain crosses the membrane as a helical span at residues 257-276 (ASFLRLAIPSMLMLCMEWWA). Topologically, residues 277 to 295 (YEVGSFLSGILGMVELGAQ) are extracellular. A helical transmembrane segment spans residues 296-316 (SIVYELAIIVYMVPAGFSVAA). Residues 317–336 (SVRVGNALGAGDMEQARKSS) are Cytoplasmic-facing. A helical membrane pass occupies residues 337–357 (TVSLLITVLFAVAFSVLLLSC). Topologically, residues 358–370 (KDHVGYIFTTDRD) are extracellular. A helical membrane pass occupies residues 371 to 391 (IINLVAQVVPIYAVSHLFEAL). The Cytoplasmic portion of the chain corresponds to 392–408 (ACTSGGVLRGSGNQKVG). A helical transmembrane segment spans residues 409–429 (AIVNTIGYYVVGLPIGIALMF). The Extracellular segment spans residues 430–437 (ATTLGVMG). Residues 438 to 458 (LWSGIIICTVFQAVCFLGFII) traverse the membrane as a helical segment. Topologically, residues 459 to 546 (QLNWKKACQQ…LSRKQLVLRR (88 aa)) are cytoplasmic. Residues 508–534 (DVGKTGEPQSDQQMRQEEPLPEHPQDG) are disordered. Over residues 521-533 (MRQEEPLPEHPQD) the composition is skewed to basic and acidic residues. Residues 547–567 (GLLLLGVFLILLVGILVRFYV) form a helical membrane-spanning segment. Residues 568–570 (RIQ) are Extracellular-facing.

The protein belongs to the multi antimicrobial extrusion (MATE) (TC 2.A.66.1) family. Widely expressed. The highest expression is found in adrenal gland, and to a lower extent in liver, skeletal muscle and kidney. In testis, primarily localized throughout the adluminal compartment of the seminiferous tubules with expression at the peritubular myoid cells and Leydig cells.

The protein localises to the cell membrane. It is found in the apical cell membrane. The catalysed reaction is thiamine(out) + H(+)(in) = thiamine(in) + H(+)(out). It carries out the reaction estrone 3-sulfate(in) + H(+)(out) = estrone 3-sulfate(out) + H(+)(in). It catalyses the reaction creatinine(in) + H(+)(out) = creatinine(out) + H(+)(in). The enzyme catalyses agmatine(in) + H(+)(out) = agmatine(out) + H(+)(in). Its function is as follows. Multidrug efflux pump that functions as a H(+)/organic cation antiporter. Plays a physiological role in the excretion of cationic compounds including endogenous metabolites, drugs, toxins through the kidney and liver, into urine and bile respectively. Mediates the efflux of endogenous compounds such as creatinine, vitamin B1/thiamine, agmatine and estrone-3-sulfate. May also contribute to regulate the transport of cationic compounds in testis across the blood-testis-barrier. In Homo sapiens (Human), this protein is Multidrug and toxin extrusion protein 1.